The sequence spans 480 residues: 3,6-anhydro-alpha-L-galactose dehydrogenase (480 aa).

NADP(+) is bound by residues 149–150, 173–176, and 226–227; these read WN, KPTS, and GS. Glutamate 248 functions as the Proton acceptor in the catalytic mechanism. Leucine 249 contributes to the NADP(+) binding site. The active-site Nucleophile is cysteine 282. Position 383 (glutamate 383) interacts with NADP(+).

This sequence belongs to the aldehyde dehydrogenase family.

It catalyses the reaction 3,6-anhydro-alpha-L-galactopyranose + NADP(+) + H2O = 3,6-anhydro-L-galactonate + NADPH + 2 H(+). The catalysed reaction is 3,6-anhydro-alpha-L-galactopyranose + NAD(+) + H2O = 3,6-anhydro-L-galactonate + NADH + 2 H(+). In terms of biological role, involved in the degradation of 3,6-anhydro-L-galactose, which is the major monomeric sugar of red macroalgae. Catalyzes the oxidation of 3,6-anhydro-L-galactose (AHG) to form 3,6-anhydrogalactonate (AHGA). The sequence is that of 3,6-anhydro-alpha-L-galactose dehydrogenase from Vibrio sp. (strain EJY3).